The chain runs to 275 residues: Elongation factor Ts (275 aa).

The interval 76-79 is involved in Mg(2+) ion dislocation from EF-Tu; that stretch reads TDFV.

The protein belongs to the EF-Ts family.

Its subcellular location is the cytoplasm. In terms of biological role, associates with the EF-Tu.GDP complex and induces the exchange of GDP to GTP. It remains bound to the aminoacyl-tRNA.EF-Tu.GTP complex up to the GTP hydrolysis stage on the ribosome. This chain is Elongation factor Ts, found in Rhodococcus jostii (strain RHA1).